Reading from the N-terminus, the 556-residue chain is Formate--tetrahydrofolate ligase (556 aa).

65–72 (TPAGEGKS) serves as a coordination point for ATP.

Belongs to the formate--tetrahydrofolate ligase family.

It carries out the reaction (6S)-5,6,7,8-tetrahydrofolate + formate + ATP = (6R)-10-formyltetrahydrofolate + ADP + phosphate. It functions in the pathway one-carbon metabolism; tetrahydrofolate interconversion. This Streptococcus suis (strain 98HAH33) protein is Formate--tetrahydrofolate ligase.